The following is a 380-amino-acid chain: L-lactate dehydrogenase (380 aa).

An FMN hydroxy acid dehydrogenase domain is found at 1–380 (MIISSPNDYR…TRDSLVGLPR (380 aa)). Y24 contacts substrate. FMN is bound by residues S106 and Q127. Y129 contacts substrate. T155 provides a ligand contact to FMN. A substrate-binding site is contributed by R164. Residue K251 participates in FMN binding. Catalysis depends on H275, which acts as the Proton acceptor. R278 is a binding site for substrate. 306–330 (DSGIRTGLDVVRMLALGAKGVLLGR) lines the FMN pocket.

It belongs to the FMN-dependent alpha-hydroxy acid dehydrogenase family. It depends on FMN as a cofactor.

It localises to the cell inner membrane. It carries out the reaction (S)-lactate + A = pyruvate + AH2. Functionally, catalyzes the conversion of L-lactate to pyruvate. Is coupled to the respiratory chain. This chain is L-lactate dehydrogenase, found in Azorhizobium caulinodans (strain ATCC 43989 / DSM 5975 / JCM 20966 / LMG 6465 / NBRC 14845 / NCIMB 13405 / ORS 571).